We begin with the raw amino-acid sequence, 79 residues long: Small ribosomal subunit protein bS21 (79 aa).

Composition is skewed to basic residues over residues 47–59 and 69–79; these read RKQA…HLKK and GVGHRRKKSTT. Residues 47–79 are disordered; it reads RKQAAAVKRHLKKISRDVSSRRGVGHRRKKSTT.

This sequence belongs to the bacterial ribosomal protein bS21 family.

In Legionella pneumophila (strain Paris), this protein is Small ribosomal subunit protein bS21.